We begin with the raw amino-acid sequence, 261 residues long: Ribosome biogenesis protein C3_06160C_A (261 aa).

The disordered stretch occupies residues 1-38 (MPQNEYIEQHIKKHGRRLDYEERKRKKEAREGHRVAKD). Short sequence motifs (nuclear localization signal) lie at residues 11-18 (IKKHGRRL) and 51-58 (AKKRYAEK). Positions 17–37 (RLDYEERKRKKEAREGHRVAK) are enriched in basic and acidic residues. The interval 59–85 (VAMKKKIKAHQESKVKGPSTPKAEDGE) is disordered.

This sequence belongs to the eukaryotic ribosomal protein eS8 family. Ribosome biogenesis protein NSA2 subfamily. In terms of assembly, component of the pre-66S ribosomal particle. Interacts with NOP7 and RRP1. Interacts with RSA4 (via WD repeats).

Its subcellular location is the nucleus. The protein localises to the nucleolus. In terms of biological role, involved in the biogenesis of the 60S ribosomal subunit. May play a part in the quality control of pre-60S particles. The chain is Ribosome biogenesis protein C3_06160C_A from Candida albicans (strain SC5314 / ATCC MYA-2876) (Yeast).